Here is a 229-residue protein sequence, read N- to C-terminus: Germin-like protein 12-1 (229 aa).

The first 22 residues, M1–A22, serve as a signal peptide directing secretion. The cysteines at positions 32 and 47 are disulfide-linked. Positions A62–D217 constitute a Cupin type-1 domain. The N-linked (GlcNAc...) asparagine glycan is linked to N78. Mn(2+) contacts are provided by H111, H113, E118, and H162.

Belongs to the germin family. As to quaternary structure, oligomer (believed to be a pentamer but probably hexamer).

Its subcellular location is the secreted. The protein resides in the extracellular space. It localises to the apoplast. Functionally, may play a role in plant defense. Probably has no oxalate oxidase activity even if the active site is conserved. The polypeptide is Germin-like protein 12-1 (Oryza sativa subsp. japonica (Rice)).